A 397-amino-acid chain; its full sequence is Odorant receptor 2a (397 aa).

At 1 to 38 (MEKQEDFKLNTHSAVYYHWRVWELTGLMRPPGVSSLLY) the chain is on the cytoplasmic side. The helical transmembrane segment at 39–59 (VVYSITVNLVVTVLFPLSLLA) threads the bilayer. Residues 60–72 (RLLFTTNMAGLCE) are Extracellular-facing. Residues 73–92 (NLTITITDIVANLKFANVYM) form a helical membrane-spanning segment. At 93 to 131 (VRKQLHEIRSLLRLMDARARLVGDPEEISALRKEVNIAQ) the chain is on the cytoplasmic side. A helical transmembrane segment spans residues 132 to 150 (GTFRTFASIFVFGTTLSCV). Topologically, residues 151–176 (RVVVRPDRELLYPAWFGVDWMHSTRN) are extracellular. The chain crosses the membrane as a helical span at residues 177–197 (YVLINIYQLFGLIVQAIQNCA). Topologically, residues 198–272 (SDSYPPAFLC…IIQRVLSVPC (75 aa)) are cytoplasmic. A helical membrane pass occupies residues 273-293 (MAQFVCSAAVQCTVAMHFLYV). At 294 to 301 (ADDHDHTA) the chain is on the extracellular side. Residues 302–322 (MIISIVFFSAVTLEVFVICYF) form a helical membrane-spanning segment. Over 323–363 (GDRMRTQSEALCDAFYDCNWIEQLPKFKRELLFTLARTQRP) the chain is Cytoplasmic. The chain crosses the membrane as a helical span at residues 364-383 (SLIYAGNYIALSLETFEQVM). The Extracellular segment spans residues 384 to 397 (RFTYSVFTLLLRAK).

The protein belongs to the insect chemoreceptor superfamily. Heteromeric odorant receptor channel (TC 1.A.69) family. Or2a subfamily. Interacts with Orco. Complexes exist early in the endomembrane system in olfactory sensory neurons (OSNs), coupling these complexes to the conserved ciliary trafficking pathway. Expressed in 20 sensory neurons on the distal edge of the antenna.

It localises to the cell membrane. In terms of biological role, odorant receptor which mediates acceptance or avoidance behavior, depending on its substrates. The odorant receptor repertoire encodes a large collection of odor stimuli that vary widely in identity, intensity, and duration. May form a complex with Orco to form odorant-sensing units, providing sensitive and prolonged odorant signaling and calcium permeability. This is Odorant receptor 2a (Or2a) from Drosophila melanogaster (Fruit fly).